The following is a 231-amino-acid chain: Caspase-like protein (231 aa).

It belongs to the peptidase C14A family.

The polypeptide is Caspase-like protein (Trichoplusia ni ascovirus 2c (TnAV-2c)).